The following is an 84-amino-acid chain: Small ribosomal subunit protein bS16 (84 aa).

The protein belongs to the bacterial ribosomal protein bS16 family.

In Endomicrobium trichonymphae, this protein is Small ribosomal subunit protein bS16.